The following is a 1036-amino-acid chain: Isoleucine--tRNA ligase (1036 aa).

The 'HIGH' region motif lies at 48 to 58 (PTANGKPHVGH). The short motif at 590–594 (KMSKS) is the 'KMSKS' region element. Residue Lys593 coordinates ATP.

This sequence belongs to the class-I aminoacyl-tRNA synthetase family. IleS type 2 subfamily. As to quaternary structure, monomer. Zn(2+) serves as cofactor.

It is found in the cytoplasm. The enzyme catalyses tRNA(Ile) + L-isoleucine + ATP = L-isoleucyl-tRNA(Ile) + AMP + diphosphate. In terms of biological role, catalyzes the attachment of isoleucine to tRNA(Ile). As IleRS can inadvertently accommodate and process structurally similar amino acids such as valine, to avoid such errors it has two additional distinct tRNA(Ile)-dependent editing activities. One activity is designated as 'pretransfer' editing and involves the hydrolysis of activated Val-AMP. The other activity is designated 'posttransfer' editing and involves deacylation of mischarged Val-tRNA(Ile). The polypeptide is Isoleucine--tRNA ligase (Clostridium tetani (strain Massachusetts / E88)).